Consider the following 398-residue polypeptide: MYIRSLELRDFRSWPELKVELKPGITIFIGRNGFGKTNIVEAIGYLAHLSSHRVSTDAPLVRANAGDARISAVAVNQGRELAAHLLIKPHAANQGQINRTRVKSPRELLGVIKTVLFAPEDLALVRGEPAERRRYLDDIIATRRPRMAGVKADYDKVLKQRNALLKTATIALRRGYGTEEGAAALATLDTWDGQLARLGAEVMAARFALVQDLSSQIRDAYQTIAPESRPAAVNYKTTIDQGLAQFGEFDAGIIEATLLTELAAKRQREIERGMSLVGPHRDDLELHLGGQPAKGFASHGETWSFALSMRIAEFNLLRSDGTDPILILDDVFSELDAGRREKLVGIARDAEQVIITAAVSDDLPANLADAITARHTVTVRDTDAGRISLLDEQPDTQP.

ATP is bound at residue 30-37 (GRNGFGKT).

It belongs to the RecF family.

The protein localises to the cytoplasm. In terms of biological role, the RecF protein is involved in DNA metabolism; it is required for DNA replication and normal SOS inducibility. RecF binds preferentially to single-stranded, linear DNA. It also seems to bind ATP. This Corynebacterium efficiens (strain DSM 44549 / YS-314 / AJ 12310 / JCM 11189 / NBRC 100395) protein is DNA replication and repair protein RecF.